The chain runs to 101 residues: MLLMNLQLFATKKGVGSSKNGRDSEAKRLGVKCADGQFVLAGSILVRQRGTKIHPGQNVGRGGDDTLFSKVDGVVRYERVGKNKKRASVYPIDVEEVIAAE.

A propeptide spanning residues 1–9 (MLLMNLQLF) is cleaved from the precursor.

This sequence belongs to the bacterial ribosomal protein bL27 family. Post-translationally, the N-terminus is cleaved by ribosomal processing cysteine protease Prp.

This Clostridium tetani (strain Massachusetts / E88) protein is Large ribosomal subunit protein bL27.